We begin with the raw amino-acid sequence, 230 residues long: Large ribosomal subunit protein bL25 (230 aa).

This sequence belongs to the bacterial ribosomal protein bL25 family. CTC subfamily. Part of the 50S ribosomal subunit; part of the 5S rRNA/L5/L18/L25 subcomplex. Contacts the 5S rRNA. Binds to the 5S rRNA independently of L5 and L18.

This is one of the proteins that binds to the 5S RNA in the ribosome where it forms part of the central protuberance. This chain is Large ribosomal subunit protein bL25 (rplY), found in Rhodopseudomonas palustris (strain ATCC BAA-98 / CGA009).